The following is a 396-amino-acid chain: MEQTWRWYGPNDPVSLDDVRQAGATGVVTALHHIPNGEVWPVEEIKKRQAVLADKGLTWSVVESIPVHEDIKTHSGQFETWIANYQQSIRNLATCGIDTVCYNFMPILDWTRTDLEYQMPDGSRALRFDQIAFAAFELHILKRPSAEADYSAEEQQQALKWFEDASDADIEKLTRNIIAGLPGAEEGYTLDQFRARLAEYGDIDKNQLRENMAYFLRAIVPVAEACGLRLAVHPDDPPRPILGLPRIVSTIEDMQWLKETVDSINNGFTMCTGSYGVREDNDLVKMIEAFGDRIHFTHLRATCRENNPKTFHEAAHLGGDVNMVAVVDAILSEEQRRKHAGDMRPIPFRPDHGHQMLDDLRKKTNPGYSAIGRLKGMAEVRGVELALKMLKYPELL.

This sequence belongs to the mannonate dehydratase family. Requires Fe(2+) as cofactor. Mn(2+) is required as a cofactor.

It catalyses the reaction D-mannonate = 2-dehydro-3-deoxy-D-gluconate + H2O. It participates in carbohydrate metabolism; pentose and glucuronate interconversion. Its function is as follows. Catalyzes the dehydration of D-mannonate. The sequence is that of Mannonate dehydratase from Enterobacter sp. (strain 638).